Here is an 848-residue protein sequence, read N- to C-terminus: ATP-dependent Clp protease ATP-binding subunit ClpC1 (848 aa).

Positions 2–144 constitute a Clp R domain; it reads FERFTDRARR…RQQVIQLLSG (143 aa). Repeat stretches follow at residues 5–70 and 80–144; these read FTDR…IGQG and FTPR…LLSG. The segment at 171 to 418 is i; the sequence is LDQFGRNLTA…RMRIRRMTAP (248 aa). 216–223 serves as a coordination point for ATP; it reads GEPGVGKT. The region spanning 425-460 is the UVR domain; sequence DEKIAEARREKESAIDAQDFEKAASLRDREKTLVAQ. The tract at residues 479 to 670 is II; the sequence is VDDEQIAEVL…VLIFTSNLGT (192 aa). Residue 553-560 coordinates ATP; the sequence is GPSGVGKT. Residues 821-848 are disordered; it reads TGTRKPPAEPDLAKAGAHSAGGPEPAAR.

This sequence belongs to the ClpA/ClpB family. ClpC subfamily.

In terms of biological role, ATP-dependent specificity component of the Clp protease. It directs the protease to specific substrates. Can perform chaperone functions in the absence of ClpP. Degrades anti-sigma-E factor RseA in the presence of ClpP2. The protein is ATP-dependent Clp protease ATP-binding subunit ClpC1 (clpC1) of Mycobacterium tuberculosis (strain ATCC 25618 / H37Rv).